The following is a 409-amino-acid chain: Broad specificity amino-acid racemase (409 aa).

The first 24 residues, Met1–Ala24, serve as a signal peptide directing secretion. Cysteines 71 and 97 form a disulfide. The active-site Proton acceptor is the Lys75. N6-(pyridoxal phosphate)lysine is present on Lys75. Residue Arg174 coordinates substrate. The active-site Proton acceptor is the Tyr301. Met349 is a binding site for substrate.

Belongs to the alanine racemase family. Bsr subfamily. The cofactor is pyridoxal 5'-phosphate.

The protein resides in the periplasm. The catalysed reaction is an L-alpha-amino acid = a D-alpha-amino acid. It carries out the reaction L-lysine = D-lysine. It catalyses the reaction L-arginine = D-arginine. The enzyme catalyses L-glutamine = D-glutamine. In terms of biological role, amino-acid racemase able to utilize a broad range of substrates. Reversibly racemizes 9 of the 19 natural chiral amino acids known, including both positively charged amino acids (Lys, Arg and His) and non-beta-branched aliphatic amino acids (Ala, Leu, Met, Ser, Gln and Asn). Among these amino acids, activity is the highest with lysine and arginine, and poor or very poor with the others. Plays a primary role in the catabolism of basic amino acid, that allows P.putida strain KT2440 to grow on L-Lys and L-Arg as the sole source of carbon and nitrogen, through conversion to their respective D-enantiomers. The protein is Broad specificity amino-acid racemase of Pseudomonas putida (strain ATCC 47054 / DSM 6125 / CFBP 8728 / NCIMB 11950 / KT2440).